The following is a 510-amino-acid chain: Maturase K (510 aa).

Belongs to the intron maturase 2 family. MatK subfamily.

The protein localises to the plastid. Its subcellular location is the chloroplast. Functionally, usually encoded in the trnK tRNA gene intron. Probably assists in splicing its own and other chloroplast group II introns. This Penstemon heterophyllus (Foothill penstemon) protein is Maturase K.